The following is a 198-amino-acid chain: Recombination protein RecR (198 aa).

The C4-type zinc-finger motif lies at 58–73; the sequence is CSVCGNYTDTDPCAIC. Residues 81–175 enclose the Toprim domain; that stretch reads SLVCVVEEPK…KVTRIAHGIP (95 aa).

Belongs to the RecR family.

May play a role in DNA repair. It seems to be involved in an RecBC-independent recombinational process of DNA repair. It may act with RecF and RecO. The protein is Recombination protein RecR of Clostridium acetobutylicum (strain ATCC 824 / DSM 792 / JCM 1419 / IAM 19013 / LMG 5710 / NBRC 13948 / NRRL B-527 / VKM B-1787 / 2291 / W).